Reading from the N-terminus, the 349-residue chain is Small ribosomal subunit protein uS2 (349 aa).

Belongs to the universal ribosomal protein uS2 family.

The chain is Small ribosomal subunit protein uS2 from Methylocella silvestris (strain DSM 15510 / CIP 108128 / LMG 27833 / NCIMB 13906 / BL2).